A 160-amino-acid polypeptide reads, in one-letter code: Dihydrofolate reductase (160 aa).

The DHFR domain occupies 1 to 160 (MVKAIWAMDQ…KVAYYHKIAR (160 aa)). 5–7 (IWA) is a binding site for substrate. NADP(+) contacts are provided by residues 6–7 (WA) and 14–19 (IGNGNS). Residues Glu27 and Arg32 each coordinate substrate. 43 to 46 (GSAT) is an NADP(+) binding site. Arg57 contributes to the substrate binding site. Residues 62-65 (LTRN) and 101-106 (CGGAQV) contribute to the NADP(+) site. Residue Ser120 coordinates substrate.

The protein belongs to the dihydrofolate reductase family.

The enzyme catalyses (6S)-5,6,7,8-tetrahydrofolate + NADP(+) = 7,8-dihydrofolate + NADPH + H(+). It functions in the pathway cofactor biosynthesis; tetrahydrofolate biosynthesis; 5,6,7,8-tetrahydrofolate from 7,8-dihydrofolate: step 1/1. Key enzyme in folate metabolism. Catalyzes an essential reaction for de novo glycine and purine synthesis, and for DNA precursor synthesis. The protein is Dihydrofolate reductase (folA) of Mycoplasma pneumoniae (strain ATCC 29342 / M129 / Subtype 1) (Mycoplasmoides pneumoniae).